A 420-amino-acid polypeptide reads, in one-letter code: Alpha-ketoglutarate-dependent xanthine dioxygenase xan-1 (420 aa).

Residues H157 and D159 each coordinate Fe cation. T206 and W336 together coordinate 2-oxoglutarate. H351 contributes to the Fe cation binding site. R366 contributes to the 2-oxoglutarate binding site. R366 is a substrate binding site.

The protein belongs to the TfdA dioxygenase family. Requires Fe(2+) as cofactor.

The protein resides in the cytoplasm. The protein localises to the cytosol. It carries out the reaction xanthine + 2-oxoglutarate + O2 = urate + succinate + CO2. Alpha-ketoglutarate-dependent xanthine dioxygenase is a non-heme mononuclear Fe(2+) enzyme that decarboxylates alpha-ketoglutarate to succinate and CO(2) while hydroxylating xanthine to generate uric acid. Allows xanthine utilization as a nitrogen source. In Neurospora crassa (strain ATCC 24698 / 74-OR23-1A / CBS 708.71 / DSM 1257 / FGSC 987), this protein is Alpha-ketoglutarate-dependent xanthine dioxygenase xan-1.